Here is a 427-residue protein sequence, read N- to C-terminus: Glutamate-1-semialdehyde 2,1-aminomutase (427 aa).

Position 265 is an N6-(pyridoxal phosphate)lysine (K265).

The protein belongs to the class-III pyridoxal-phosphate-dependent aminotransferase family. HemL subfamily. In terms of assembly, homodimer. Pyridoxal 5'-phosphate serves as cofactor.

Its subcellular location is the cytoplasm. It catalyses the reaction (S)-4-amino-5-oxopentanoate = 5-aminolevulinate. Its pathway is porphyrin-containing compound metabolism; protoporphyrin-IX biosynthesis; 5-aminolevulinate from L-glutamyl-tRNA(Glu): step 2/2. The polypeptide is Glutamate-1-semialdehyde 2,1-aminomutase (Nitratiruptor sp. (strain SB155-2)).